Reading from the N-terminus, the 156-residue chain is Transcription elongation factor GreA (156 aa).

Positions 46–66 (AEYHAAREKQSFVEGRIKELE) form a coiled coil.

It belongs to the GreA/GreB family.

Functionally, necessary for efficient RNA polymerase transcription elongation past template-encoded arresting sites. The arresting sites in DNA have the property of trapping a certain fraction of elongating RNA polymerases that pass through, resulting in locked ternary complexes. Cleavage of the nascent transcript by cleavage factors such as GreA or GreB allows the resumption of elongation from the new 3'terminus. GreA releases sequences of 2 to 3 nucleotides. The protein is Transcription elongation factor GreA of Paracoccus denitrificans (strain Pd 1222).